Reading from the N-terminus, the 622-residue chain is FERM domain-containing protein 6 (622 aa).

Residues 16–328 (RSVCIFLPND…NSHRLYMNLQ (313 aa)) enclose the FERM domain. The tract at residues 364–445 (KRSRASGSSA…SGVESGGKDR (82 aa)) is disordered. Low complexity-rich tracts occupy residues 384–395 (HSTASHSSSHTS) and 425–438 (SSMT…TSGV). At Ser522 the chain carries Phosphoserine. Position 523 is a phosphothreonine (Thr523). Phosphoserine is present on residues Ser525, Ser542, and Ser544.

The protein resides in the cytoplasm. It is found in the cell membrane. This chain is FERM domain-containing protein 6 (FRMD6), found in Homo sapiens (Human).